Here is a 351-residue protein sequence, read N- to C-terminus: Dihydroorotate dehydrogenase (quinone) (351 aa).

Residues 67–71 and threonine 91 contribute to the FMN site; that span reads AGFDK. Position 71 (lysine 71) interacts with substrate. Substrate is bound at residue 116–120; that stretch reads NAMGF. Residues asparagine 145 and asparagine 178 each contribute to the FMN site. Asparagine 178 contributes to the substrate binding site. Catalysis depends on serine 181, which acts as the Nucleophile. Asparagine 183 serves as a coordination point for substrate. Lysine 214 and threonine 242 together coordinate FMN. 243–244 contacts substrate; it reads NT. Residues glycine 262, glycine 291, and 312–313 each bind FMN; that span reads YS.

The protein belongs to the dihydroorotate dehydrogenase family. Type 2 subfamily. Monomer. FMN serves as cofactor.

Its subcellular location is the cell membrane. The catalysed reaction is (S)-dihydroorotate + a quinone = orotate + a quinol. The protein operates within pyrimidine metabolism; UMP biosynthesis via de novo pathway; orotate from (S)-dihydroorotate (quinone route): step 1/1. Its function is as follows. Catalyzes the conversion of dihydroorotate to orotate with quinone as electron acceptor. The sequence is that of Dihydroorotate dehydrogenase (quinone) from Helicobacter pylori (strain G27).